A 729-amino-acid chain; its full sequence is Neurochondrin (729 aa).

Ser-2 carries the N-acetylserine modification. Phosphoserine is present on Ser-2. Ser-2 is modified (N-acetylalanine). 2 S-palmitoyl cysteine lipidation sites follow: Cys-3 and Cys-4. The residue at position 75 (Arg-75) is an Asymmetric dimethylarginine. Ser-448 is subject to Phosphoserine.

Belongs to the neurochondrin family. In terms of assembly, interacts with MCHR1. Interacts with SEMA4C. Interacts with DIAPH1 (via FH3 domain). Interacts with GRM5. Palmitoylated. Palmitoylation by ZDHHC1, ZDHHC3 and ZDHHC11 regulates the association of NCDN with endosome membranes. May also be palmitoylated by ZDHHC7. In terms of tissue distribution, abundantly expressed in whole adult brain and in all individual brain regions examined, including spinal cord. Weakly expressed in ovary, testis, fetal brain and small intestine.

It is found in the cytoplasm. It localises to the cytosol. The protein resides in the endosome membrane. The protein localises to the cell projection. Its subcellular location is the dendrite. It is found in the postsynapse. In terms of biological role, probably involved in signal transduction in the nervous system, via increasing cell surface localization of GRM5/mGluR5 and positively regulating its signaling. Required for the spatial learning process. Acts as a negative regulator of Ca(2+)-calmodulin-dependent protein kinase 2 (CaMK2) phosphorylation. May play a role in modulating melanin-concentrating hormone-mediated functions via its interaction with MCHR1 that interferes with G protein-coupled signal transduction. May be involved in bone metabolism. May also be involved in neurite outgrowth. The chain is Neurochondrin from Homo sapiens (Human).